The chain runs to 212 residues: Ribosomal RNA small subunit methyltransferase G (212 aa).

Residues Gly-73, 127–128 (IE), and Arg-143 each bind S-adenosyl-L-methionine.

This sequence belongs to the methyltransferase superfamily. RNA methyltransferase RsmG family.

Its subcellular location is the cytoplasm. It catalyses the reaction guanosine(527) in 16S rRNA + S-adenosyl-L-methionine = N(7)-methylguanosine(527) in 16S rRNA + S-adenosyl-L-homocysteine. Specifically methylates the N7 position of guanine in position 527 of 16S rRNA. The polypeptide is Ribosomal RNA small subunit methyltransferase G (Methylobacterium nodulans (strain LMG 21967 / CNCM I-2342 / ORS 2060)).